A 434-amino-acid polypeptide reads, in one-letter code: Quinolone resistance transporter (434 aa).

The next 12 membrane-spanning stretches (helical) occupy residues 15 to 35 (LIPA…AVGF), 45 to 65 (GIGD…YFLF), 85 to 105 (ILLT…PKSF), 110 to 130 (FLLG…ITQW), 142 to 162 (MFVL…GLLL), 175 to 195 (WLFV…FLWL), 241 to 261 (VLLL…LNLW), 275 to 295 (IQIG…LLII), 306 to 326 (YGHL…SGWL), 333 to 353 (LAAL…FWTL), 367 to 387 (IALI…GIGL), and 396 to 416 (AAGL…TYIV).

This sequence belongs to the major facilitator superfamily.

It is found in the cell inner membrane. In terms of biological role, efflux pump that mediates resistance to quinolone-type antibiotics. The polypeptide is Quinolone resistance transporter (Acinetobacter baumannii).